Consider the following 1037-residue polypeptide: Outer dynein arm-docking complex subunit 2 (1037 aa).

Basic and acidic residues-rich tracts occupy residues 316–334 (EEQQ…EDGH) and 376–391 (SSIK…KLEK). Disordered stretches follow at residues 316–353 (EEQQ…FGKS) and 376–439 (SSIK…ANAD). 10 ARM repeats span residues 477–516 (ETCQ…EISH), 518–557 (PQIR…NVAK), 528–570 (GGLP…QHGG), 615–654 (HSNK…ECAS), 656–695 (ENYR…QCAE), 739–778 (KENV…ECCQ), 821–860 (PESM…PCIE), 864–903 (DAGE…NIAK), 905–944 (QENL…RCCM), and 946–985 (GRNR…QLSE). Lys545 is modified (N6-methyllysine).

Component of the outer dynein arm-docking complex along with ODAD1, ODAD3, and ODAD4. Interacts with CFAP61. Highly expressed in testis. In males, also detected at lower levels in lung, brain, liver and muscle. In females, detected in ovary.

The protein resides in the cytoplasm. The protein localises to the cytoskeleton. Its subcellular location is the cilium axoneme. It is found in the cilium basal body. In terms of biological role, component of the outer dynein arm-docking complex (ODA-DC) that mediates outer dynein arms (ODA) binding onto the doublet microtubule. Involved in mediating assembly of both ODAs and their axonemal docking complex onto ciliary microtubules. The sequence is that of Outer dynein arm-docking complex subunit 2 from Mus musculus (Mouse).